We begin with the raw amino-acid sequence, 426 residues long: MNIAVIGLSHKTAPVDVREKLSVPEDVRERALQHLCGYAHIQEATILSTCNRLEIYIVTSDTEVGVREVHQFLSEWSHIPLPQLRPYLFILLHQDAVMHLMRVASGLDSLVIGEGQILSQVKRCHQLGQQYKSIGPILNRVFTGAIAAGKRVRTETSIGTGAVSISSAAVELADLRLQNLQNCRIAVVGAGKMSRLVVQHLIARGVKEIRIINRSLERAQELAQQFPEVRFELFTMTDLLPIVAAMDLVFTSTAATEPLLDRDNLGAVLVGDRSLAIIDISVPRNVHANVTELGTVQLFNVDDLQAVVAQNQEARRQLAQEAEGILEEELETFLAWWHALETVPIIRSLRQKMEAIRTQELEKALSRLGSEFADKHQGVIEAMTRTIINKILHDPTVQLQSQRDLESRQRAMQTLQDLFNLEPIEA.

Residues 49–52 (TCNR), Ser109, 114–116 (EGQ), and Gln120 each bind substrate. Residue Cys50 is the Nucleophile of the active site. 189–194 (GAGKMS) serves as a coordination point for NADP(+).

It belongs to the glutamyl-tRNA reductase family. In terms of assembly, homodimer.

It catalyses the reaction (S)-4-amino-5-oxopentanoate + tRNA(Glu) + NADP(+) = L-glutamyl-tRNA(Glu) + NADPH + H(+). Its pathway is porphyrin-containing compound metabolism; protoporphyrin-IX biosynthesis; 5-aminolevulinate from L-glutamyl-tRNA(Glu): step 1/2. The protein operates within porphyrin-containing compound metabolism; chlorophyll biosynthesis. Functionally, catalyzes the NADPH-dependent reduction of glutamyl-tRNA(Glu) to glutamate 1-semialdehyde (GSA). In Thermosynechococcus vestitus (strain NIES-2133 / IAM M-273 / BP-1), this protein is Glutamyl-tRNA reductase.